We begin with the raw amino-acid sequence, 812 residues long: Ras guanine nucleotide exchange factor J (812 aa).

Low complexity-rich tracts occupy residues Met1–Ser36 and Leu53–Asn65. Residues Met1–Ser146 are disordered. Over residues Ser75–Pro86 the composition is skewed to polar residues. A compositionally biased stretch (low complexity) spans Asn87 to Asn101. The segment covering Asn131–Gly141 has biased composition (gly residues). In terms of domain architecture, LisH spans Gly214 to Tyr246. The tract at residues Ile320–Tyr382 is disordered. Residues Val323–Phe343 show a composition bias toward basic and acidic residues. The segment covering Gly344–Tyr382 has biased composition (low complexity). The 127-residue stretch at Asn409 to Lys535 folds into the N-terminal Ras-GEF domain. A Ras-GEF domain is found at Asp573–Arg804.

In terms of biological role, promotes the exchange of Ras-bound GDP by GTP. In Dictyostelium discoideum (Social amoeba), this protein is Ras guanine nucleotide exchange factor J (gefJ).